A 259-amino-acid polypeptide reads, in one-letter code: Phosphate import ATP-binding protein PstB 2 (259 aa).

The 243-residue stretch at 12–254 (ISARGLNVHY…PKEPLTQGYI (243 aa)) folds into the ABC transporter domain. 44-51 (GPSGCGKS) is a binding site for ATP.

It belongs to the ABC transporter superfamily. Phosphate importer (TC 3.A.1.7) family. The complex is composed of two ATP-binding proteins (PstB), two transmembrane proteins (PstC and PstA) and a solute-binding protein (PstS).

The protein localises to the cell inner membrane. The catalysed reaction is phosphate(out) + ATP + H2O = ADP + 2 phosphate(in) + H(+). Functionally, part of the ABC transporter complex PstSACB involved in phosphate import. Responsible for energy coupling to the transport system. The protein is Phosphate import ATP-binding protein PstB 2 of Paramagnetospirillum magneticum (strain ATCC 700264 / AMB-1) (Magnetospirillum magneticum).